We begin with the raw amino-acid sequence, 238 residues long: Putative ABC transporter ATP-binding protein AF_1841 (238 aa).

Residues 8–238 (IEADSVSYDY…EELLEKAGVI (231 aa)) form the ABC transporter domain. 41–48 (GANGSGKS) is a binding site for ATP.

Belongs to the ABC transporter superfamily.

The protein localises to the cell membrane. Functionally, probably part of an ABC transporter complex. Responsible for energy coupling to the transport system. This Archaeoglobus fulgidus (strain ATCC 49558 / DSM 4304 / JCM 9628 / NBRC 100126 / VC-16) protein is Putative ABC transporter ATP-binding protein AF_1841.